Reading from the N-terminus, the 510-residue chain is ATP synthase subunit alpha (510 aa).

Residue 169-176 (GDRQTGKS) coordinates ATP.

It belongs to the ATPase alpha/beta chains family. In terms of assembly, F-type ATPases have 2 components, CF(1) - the catalytic core - and CF(0) - the membrane proton channel. CF(1) has five subunits: alpha(3), beta(3), gamma(1), delta(1), epsilon(1). CF(0) has three main subunits: a(1), b(2) and c(9-12). The alpha and beta chains form an alternating ring which encloses part of the gamma chain. CF(1) is attached to CF(0) by a central stalk formed by the gamma and epsilon chains, while a peripheral stalk is formed by the delta and b chains.

It localises to the cell membrane. The catalysed reaction is ATP + H2O + 4 H(+)(in) = ADP + phosphate + 5 H(+)(out). In terms of biological role, produces ATP from ADP in the presence of a proton gradient across the membrane. The alpha chain is a regulatory subunit. The polypeptide is ATP synthase subunit alpha (Wigglesworthia glossinidia brevipalpis).